We begin with the raw amino-acid sequence, 264 residues long: Thymidylate synthase (264 aa).

Residue Arg-21 participates in dUMP binding. Position 51 (His-51) interacts with (6R)-5,10-methylene-5,6,7,8-tetrahydrofolate. 126–127 (RR) lines the dUMP pocket. Catalysis depends on Cys-146, which acts as the Nucleophile. DUMP-binding positions include 166 to 169 (RSCD), Asn-177, and 207 to 209 (HLY). Residue Asp-169 participates in (6R)-5,10-methylene-5,6,7,8-tetrahydrofolate binding. (6R)-5,10-methylene-5,6,7,8-tetrahydrofolate is bound at residue Ala-263.

Belongs to the thymidylate synthase family. Bacterial-type ThyA subfamily. As to quaternary structure, homodimer.

It is found in the cytoplasm. The catalysed reaction is dUMP + (6R)-5,10-methylene-5,6,7,8-tetrahydrofolate = 7,8-dihydrofolate + dTMP. Its pathway is pyrimidine metabolism; dTTP biosynthesis. In terms of biological role, catalyzes the reductive methylation of 2'-deoxyuridine-5'-monophosphate (dUMP) to 2'-deoxythymidine-5'-monophosphate (dTMP) while utilizing 5,10-methylenetetrahydrofolate (mTHF) as the methyl donor and reductant in the reaction, yielding dihydrofolate (DHF) as a by-product. This enzymatic reaction provides an intracellular de novo source of dTMP, an essential precursor for DNA biosynthesis. This chain is Thymidylate synthase, found in Shigella flexneri serotype 5b (strain 8401).